A 601-amino-acid polypeptide reads, in one-letter code: Mitochondrial tRNA methylthiotransferase CDK5RAP1 (601 aa).

The N-terminal 33 residues, 1 to 33, are a transit peptide targeting the mitochondrion; sequence MHPLQCVLQVQRSLGWGPLASVSWLSLRMCRAH. Positions 100-220 constitute an MTTase N-terminal domain; the sequence is RKVYLETYGC…LPRLLAVAES (121 aa). [4Fe-4S] cluster contacts are provided by Cys-109, Cys-145, Cys-183, Cys-258, Cys-262, and Cys-265. Residues 244–512 enclose the Radical SAM core domain; it reads SASATSAFVS…ITIFREEATK (269 aa). One can recognise a TRAM domain in the interval 515-590; it reads QTSVGCTQLV…SQTLRGHVLC (76 aa).

It belongs to the methylthiotransferase family. MiaB subfamily. Interacts with CDK5R1 (p35 form). CDK5RAP1, CDK5RAP2 and CDK5RAP3 show competitive binding to CDK5R1. Forms a complex with CDK5R1 and CDK5. [4Fe-4S] cluster is required as a cofactor. In terms of tissue distribution, expressed in heart, brain, placenta, lung, liver, skeletal muscle, kidney and pancreas. Expressed in neurons of central nervous tissue. As to expression, mainly expressed in brain, placenta and testis. High expression in placenta and lung.

The protein resides in the mitochondrion. The enzyme catalyses N(6)-dimethylallyladenosine(37) in tRNA + (sulfur carrier)-SH + AH2 + 2 S-adenosyl-L-methionine = 2-methylsulfanyl-N(6)-dimethylallyladenosine(37) in tRNA + (sulfur carrier)-H + 5'-deoxyadenosine + L-methionine + A + S-adenosyl-L-homocysteine + 2 H(+). Methylthiotransferase that catalyzes the conversion of N6-(dimethylallyl)adenosine (i(6)A) to 2-methylthio-N6-(dimethylallyl)adenosine (ms(2)i(6)A) at position 37 (adjacent to the 3'-end of the anticodon) of four mitochondrial DNA-encoded tRNAs (Ser(UCN), Phe, Tyr and Trp). Essential for efficient and highly accurate protein translation by the ribosome. Specifically inhibits CDK5 activation by CDK5R1. Essential for efficient mitochondrial protein synthesis and respiratory chain; shows pathological consequences in mitochondrial disease. This Homo sapiens (Human) protein is Mitochondrial tRNA methylthiotransferase CDK5RAP1.